Consider the following 395-residue polypeptide: Digeranylgeranylglycerophospholipid reductase (395 aa).

Residues alanine 15, aspartate 34, cysteine 45, alanine 46, alanine 48, arginine 97, alanine 121, aspartate 276, and glycine 288 each contribute to the FAD site. Arginine 329 is an a 2,3-bis-O-(geranylgeranyl)-sn-glycerol 1-phospholipid binding site.

This sequence belongs to the geranylgeranyl reductase family. DGGGPL reductase subfamily. FAD is required as a cofactor.

It catalyses the reaction a 2,3-bis-O-phytanyl-sn-glycerol 1-phospholipid + 8 A = a 2,3-bis-O-(geranylgeranyl)-sn-glycerol 1-phospholipid + 8 AH2. The catalysed reaction is 2,3-bis-O-(phytanyl)-sn-glycerol 1-phosphate + 8 A = 2,3-bis-O-(geranylgeranyl)-sn-glycerol 1-phosphate + 8 AH2. It carries out the reaction CDP-2,3-bis-O-(geranylgeranyl)-sn-glycerol + 8 AH2 = CDP-2,3-bis-O-(phytanyl)-sn-glycerol + 8 A. The enzyme catalyses archaetidylserine + 8 AH2 = 2,3-bis-O-phytanyl-sn-glycero-3-phospho-L-serine + 8 A. The protein operates within membrane lipid metabolism; glycerophospholipid metabolism. Functionally, is involved in the reduction of 2,3-digeranylgeranylglycerophospholipids (unsaturated archaeols) into 2,3-diphytanylglycerophospholipids (saturated archaeols) in the biosynthesis of archaeal membrane lipids. Catalyzes the formation of archaetidic acid (2,3-di-O-phytanyl-sn-glyceryl phosphate) from 2,3-di-O-geranylgeranylglyceryl phosphate (DGGGP) via the hydrogenation of each double bond of the isoprenoid chains. Is also probably able to reduce double bonds of geranyl groups in CDP-2,3-bis-O-(geranylgeranyl)-sn-glycerol and archaetidylserine, thus acting at various stages in the biosynthesis of archaeal membrane lipids. The sequence is that of Digeranylgeranylglycerophospholipid reductase from Thermococcus kodakarensis (strain ATCC BAA-918 / JCM 12380 / KOD1) (Pyrococcus kodakaraensis (strain KOD1)).